We begin with the raw amino-acid sequence, 377 residues long: dTDP-fucopyranose mutase (377 aa).

FAD contacts are provided by residues S12, 31-32 (DD), N39, 58-59 (HI), R348, and 355-360 (LDMDVC).

It belongs to the UDP-galactopyranose/dTDP-fucopyranose mutase family. FAD serves as cofactor.

The enzyme catalyses dTDP-alpha-D-fucose = dTDP-alpha-D-fucofuranose. The protein operates within bacterial outer membrane biogenesis; LPS O-antigen biosynthesis. Its activity is regulated as follows. Inhibited by Cu(2+), while other divalent cations such as Ca(2+), Co(2+), Fe(2+) and Mg(2+) have no obvious effects on enzyme activity. Its function is as follows. Catalyzes the conversion of dTDP-alpha-D-fucopyranose to dTDP-alpha-D-fucofuranose. This is a step in the biosynthesis of D-fucofuranose, a component of E.coli O52 O antigen. In Escherichia coli, this protein is dTDP-fucopyranose mutase (fcf2).